The following is a 272-amino-acid chain: 3-methyl-2-oxobutanoate hydroxymethyltransferase (272 aa).

Positions 52 and 91 each coordinate Mg(2+). 3-methyl-2-oxobutanoate-binding positions include 52–53 (DS), aspartate 91, and lysine 121. Residue glutamate 123 participates in Mg(2+) binding. Residue glutamate 190 is the Proton acceptor of the active site.

Belongs to the PanB family. In terms of assembly, homodecamer; pentamer of dimers. The cofactor is Mg(2+).

It is found in the cytoplasm. It catalyses the reaction 3-methyl-2-oxobutanoate + (6R)-5,10-methylene-5,6,7,8-tetrahydrofolate + H2O = 2-dehydropantoate + (6S)-5,6,7,8-tetrahydrofolate. Its pathway is cofactor biosynthesis; (R)-pantothenate biosynthesis; (R)-pantoate from 3-methyl-2-oxobutanoate: step 1/2. In terms of biological role, catalyzes the reversible reaction in which hydroxymethyl group from 5,10-methylenetetrahydrofolate is transferred onto alpha-ketoisovalerate to form ketopantoate. In Christiangramia forsetii (strain DSM 17595 / CGMCC 1.15422 / KT0803) (Gramella forsetii), this protein is 3-methyl-2-oxobutanoate hydroxymethyltransferase.